Consider the following 1273-residue polypeptide: Chitin synthase 7 (1273 aa).

Residues 1 to 69 (MPAVERNAPF…LINPSSGGPG (69 aa)) form a disordered region. Topologically, residues 1–79 (MPAVERNAPF…FSAASRSKHR (79 aa)) are cytoplasmic. Residues 80 to 100 (FSWWTAFSLFVTFWAPSPLLS) traverse the membrane as a helical segment. Topologically, residues 101-117 (SCCGLKDKQSRQAWREK) are extracellular. A helical transmembrane segment spans residues 118–138 (VSLVFIAILLGGFIGFITMGL). Residues 139–360 (NAALCPSASS…FISNLVLYCS (222 aa)) lie on the Cytoplasmic side of the membrane. A helical membrane pass occupies residues 361-381 (LVVILAIVLIRFFMAVWFAWF). Residues 382–820 (MAGRMSSPPR…LCGTFCFSMQ (439 aa)) are Extracellular-facing. Asparagine 412 carries N-linked (GlcNAc...) asparagine glycosylation. The segment at 416 to 451 (AAPWANKQRPPPSQPARRRRDSAQSATPSVPDSLSV) is disordered. Residues asparagine 667 and asparagine 796 are each glycosylated (N-linked (GlcNAc...) asparagine). A helical membrane pass occupies residues 821-841 (FVVFMDLLGTAVLPISIALTY). At 842–857 (TLVVTYCLNPPHSFTE) the chain is on the cytoplasmic side. Residues 858 to 878 (AIPLMLLVAVIGMPALLILLA) form a helical membrane-spanning segment. Residues 879–881 (TRK) are Extracellular-facing. A helical membrane pass occupies residues 882 to 902 (VVYVLWMLIYLLALPVWNFVL). At 903–1273 (PVYSFWHFDD…RGRSYHDRFS (371 aa)) the chain is on the cytoplasmic side. Disordered stretches follow at residues 966 to 1009 (RELE…SVTV) and 1126 to 1273 (NGGG…DRFS). Low complexity predominate over residues 1000-1009 (SDSFSDSVTV). Over residues 1215–1232 (QHPPQPSQPPQPPQPAQP) the composition is skewed to pro residues. Residues 1233 to 1246 (TRPGGAPAAPPRGA) show a composition bias toward low complexity.

It belongs to the chitin synthase family. Class IV subfamily.

Its subcellular location is the cell membrane. The protein resides in the cytoplasmic vesicle membrane. The enzyme catalyses [(1-&gt;4)-N-acetyl-beta-D-glucosaminyl](n) + UDP-N-acetyl-alpha-D-glucosamine = [(1-&gt;4)-N-acetyl-beta-D-glucosaminyl](n+1) + UDP + H(+). In terms of biological role, polymerizes chitin, a structural polymer of the cell wall and septum, by transferring the sugar moiety of UDP-GlcNAc to the non-reducing end of the growing chitin polymer. The protein is Chitin synthase 7 of Mycosarcoma maydis (Corn smut fungus).